The primary structure comprises 355 residues: Iron deficiency-induced protein A (355 aa).

The tat-type signal signal peptide spans 1–34 (MEKVGRRVFLGMGAAATAYVTHHLWNQNAESSYA). Fe cation is bound by residues H49, Y50, Y180, Y236, and Y237.

Belongs to the bacterial solute-binding protein 1 family. In terms of processing, predicted to be exported by the Tat system. The position of the signal peptide cleavage has not been experimentally proven.

It localises to the cellular thylakoid membrane. Plays an important role in protecting the acceptor side of photosystem II (PSII) against oxidative damage, especially under iron-limiting growth conditions. In terms of biological role, may also be part of a periplasmic ABC transporter complex involved in iron import. This is Iron deficiency-induced protein A (idiA) from Thermosynechococcus vestitus (strain NIES-2133 / IAM M-273 / BP-1).